The chain runs to 172 residues: 3-hydroxydecanoyl-[acyl-carrier-protein] dehydratase (172 aa).

Residue H71 is part of the active site.

The protein belongs to the thioester dehydratase family. FabA subfamily. In terms of assembly, homodimer.

Its subcellular location is the cytoplasm. The enzyme catalyses a (3R)-hydroxyacyl-[ACP] = a (2E)-enoyl-[ACP] + H2O. It catalyses the reaction (3R)-hydroxydecanoyl-[ACP] = (2E)-decenoyl-[ACP] + H2O. It carries out the reaction (2E)-decenoyl-[ACP] = (3Z)-decenoyl-[ACP]. The protein operates within lipid metabolism; fatty acid biosynthesis. Necessary for the introduction of cis unsaturation into fatty acids. Catalyzes the dehydration of (3R)-3-hydroxydecanoyl-ACP to E-(2)-decenoyl-ACP and then its isomerization to Z-(3)-decenoyl-ACP. Can catalyze the dehydratase reaction for beta-hydroxyacyl-ACPs with saturated chain lengths up to 16:0, being most active on intermediate chain length. This is 3-hydroxydecanoyl-[acyl-carrier-protein] dehydratase from Blochmanniella floridana.